The following is a 90-amino-acid chain: Acylphosphatase (90 aa).

The 88-residue stretch at 3–90 (KKQFVVYGIV…HSFGLFSVEH (88 aa)) folds into the Acylphosphatase-like domain. Residues Arg-18 and Asn-36 contribute to the active site.

It belongs to the acylphosphatase family.

It carries out the reaction an acyl phosphate + H2O = a carboxylate + phosphate + H(+). This chain is Acylphosphatase (acyP), found in Mannheimia succiniciproducens (strain KCTC 0769BP / MBEL55E).